The chain runs to 206 residues: N-(5'-phosphoribosyl)anthranilate isomerase (206 aa).

This sequence belongs to the TrpF family.

It catalyses the reaction N-(5-phospho-beta-D-ribosyl)anthranilate = 1-(2-carboxyphenylamino)-1-deoxy-D-ribulose 5-phosphate. It participates in amino-acid biosynthesis; L-tryptophan biosynthesis; L-tryptophan from chorismate: step 3/5. The protein is N-(5'-phosphoribosyl)anthranilate isomerase of Pseudomonas putida (strain ATCC 47054 / DSM 6125 / CFBP 8728 / NCIMB 11950 / KT2440).